Consider the following 139-residue polypeptide: uncharacterized protein (139 aa).

A disordered region spans residues 54–75; it reads NSLHRHGDQAWGKHRRQNSLKS.

This is an uncharacterized protein from Homo sapiens (Human).